A 702-amino-acid chain; its full sequence is A-type inclusion protein A25 homolog (702 aa).

The segment at 342–380 is disordered; the sequence is TNTGIEEPHATGGDKEDQPIKVVHPPNNDKDDAIKSYNP. Residues 347-360 show a composition bias toward basic and acidic residues; the sequence is EEPHATGGDKEDQP. Coiled-coil stretches lie at residues 420 to 522 and 548 to 692; these read NGGE…RDGK and EIDK…NNKT.

This sequence belongs to the poxviridae A25 protein family. In terms of assembly, interacts (via N-terminus) with protein A26.

It localises to the virion. Functionally, structural protein that forms a matrix surrounding the mature virion (MV) through interaction with protein A26. Presence of protein A25 in the virion structurally prevents direct virus-cell fusion mechanism. The sequence is that of A-type inclusion protein A25 homolog from Variola virus (isolate Human/India/Ind3/1967) (VARV).